Reading from the N-terminus, the 567-residue chain is Proline--tRNA ligase (567 aa).

Belongs to the class-II aminoacyl-tRNA synthetase family. ProS type 1 subfamily. As to quaternary structure, homodimer.

Its subcellular location is the cytoplasm. It carries out the reaction tRNA(Pro) + L-proline + ATP = L-prolyl-tRNA(Pro) + AMP + diphosphate. In terms of biological role, catalyzes the attachment of proline to tRNA(Pro) in a two-step reaction: proline is first activated by ATP to form Pro-AMP and then transferred to the acceptor end of tRNA(Pro). As ProRS can inadvertently accommodate and process non-cognate amino acids such as alanine and cysteine, to avoid such errors it has two additional distinct editing activities against alanine. One activity is designated as 'pretransfer' editing and involves the tRNA(Pro)-independent hydrolysis of activated Ala-AMP. The other activity is designated 'posttransfer' editing and involves deacylation of mischarged Ala-tRNA(Pro). The misacylated Cys-tRNA(Pro) is not edited by ProRS. The chain is Proline--tRNA ligase from Campylobacter curvus (strain 525.92).